The following is a 484-amino-acid chain: Arginine ADP-riboxanase OspC3 (484 aa).

The NAD(+) site is built by H143, Q144, S145, N155, K157, T169, N172, and T173. The active site involves E326. 3 ANK repeats span residues 369–398 (MAHQ…FTKQ), 413–444 (NLYD…DVNK), and 451–480 (SGDT…ILGK).

Belongs to the OspC family. As to quaternary structure, interacts with host calmodulin (CALM1, CALM2 and/or CALM3); specifically interacts with the apo form of calmodulin, preventing calcium-binding.

The protein localises to the secreted. It is found in the host cytoplasm. It carries out the reaction L-arginyl-[protein] + NAD(+) = ADP-riboxanated L-argininyl-[protein] + nicotinamide + NH4(+) + H(+). Its activity is regulated as follows. Interaction with host calmodulin (CALM1, CALM2 and/or CALM3) is required to mediate arginine ADP-riboxanation of host caspases. Its function is as follows. ADP-riboxanase effector that inhibits host cell pyroptosis. Acts by mediating arginine ADP-riboxanation of host CASP4/CASP11, blocking CASP4/CASP11 autoprocessing. This prevents CASP4 activation and ability to recognize and cleave GSDMD, thereby inhibiting LPS-induced pyroptosis. ADP-riboxanation takes place in two steps: OspC3 first catalyzes ADP-ribosylation of target Arg, and then initiates a deamination to remove one N-omega group. Independently of its ADP-riboxanase activity, acts as an inhibitor of calcium signaling by inhibiting host calmodulin, preventing activation of the JAK-STAT signaling pathway in response to interferon-beta. Mechanistically, acts by binding to the apo form of calmodulin, preventing calcium-binding and ability to activate host CaMK2 (CAMKII), which is required to stimulate the JAK-STAT signaling pathway in response to interferon-beta. The sequence is that of Arginine ADP-riboxanase OspC3 from Shigella flexneri.